The primary structure comprises 554 residues: Intraflagellar transport protein 56 (554 aa).

A disordered region spans residues 1–27; sequence MMLSRAKPAVGGESPHTDKRKKKGRKI. Over residues 18 to 27 the composition is skewed to basic residues; the sequence is DKRKKKGRKI. 4 TPR repeats span residues 57 to 90, 92 to 125, 151 to 184, and 468 to 501; these read EDTN…ENCN, EVWV…LQNR, KEDQ…NREY, and ANDC…EGKR.

The protein belongs to the IFT56 family. In terms of assembly, component of the IFT complex B. Interacts with IFT46; the interaction is direct.

It is found in the cell projection. Its subcellular location is the cilium. In terms of biological role, component of the intraflagellar transport (IFT) complex B required for transport of proteins in the motile cilium. Required for transport of specific ciliary cargo proteins related to motility, while it is neither required for IFT complex B assembly or motion nor for cilium assembly. Required for efficient coupling between the accumulation of GLI2 and GLI3 at the ciliary tips and their dissociation from the negative regulator SUFU. Plays a key role in maintaining the integrity of the IFT complex B and the proper ciliary localization of the IFT complex B components. Not required for IFT complex A ciliary localization or function. Essential for maintaining proper microtubule organization within the ciliary axoneme. This Rattus norvegicus (Rat) protein is Intraflagellar transport protein 56.